The following is a 384-amino-acid chain: Stress response protein bis1 (384 aa).

Disordered stretches follow at residues 1–22 and 344–384; these read MSLA…NKEQ and SPLH…PKRV.

Belongs to the ESS2 family. Heterodimer with ish1.

It localises to the nucleus. Its subcellular location is the cytoplasm. The protein localises to the cytoskeleton. The protein resides in the spindle. Functionally, has a role in maintaining cell viability during stationary phase induced by stress response. May be involved in pre-mRNA splicing. The polypeptide is Stress response protein bis1 (bis1) (Schizosaccharomyces pombe (strain 972 / ATCC 24843) (Fission yeast)).